A 96-amino-acid polypeptide reads, in one-letter code: CRISPR-associated endoribonuclease Cas2 (96 aa).

A Mg(2+)-binding site is contributed by Asp-8.

It belongs to the CRISPR-associated endoribonuclease Cas2 protein family. As to quaternary structure, homodimer, forms a heterotetramer with a Cas1 homodimer. The cofactor is Mg(2+).

Its function is as follows. CRISPR (clustered regularly interspaced short palindromic repeat), is an adaptive immune system that provides protection against mobile genetic elements (viruses, transposable elements and conjugative plasmids). CRISPR clusters contain sequences complementary to antecedent mobile elements and target invading nucleic acids. CRISPR clusters are transcribed and processed into CRISPR RNA (crRNA). Functions as a ssRNA-specific endoribonuclease. Involved in the integration of spacer DNA into the CRISPR cassette. The chain is CRISPR-associated endoribonuclease Cas2 from Chlorobaculum tepidum (strain ATCC 49652 / DSM 12025 / NBRC 103806 / TLS) (Chlorobium tepidum).